Reading from the N-terminus, the 319-residue chain is MLASGMLLENRLVERRSIIRLVEENFRDHFPSDQELPGLEFFPLGEDSWSYRCGPLWISVRRDLDGHFPGAYEVSLLLSESGKGYVLAPLPGRNGRVVHRIADFPVVVFPYVESATTPPAPPTQEQIDLLIARLGEVHAFEPPASRPVDVPTEDFRFPFENDLDKAVQAALNGDAAAGGPYAGLLAERVDRCQGFLAELREEATRVAGECAARWRGERPALTHGDPSLANVLFTKGVDIIDWGGAMWAPPERDWAALQRVFGTAPRSRPEFLRFYELRWHLAEIAEYATRFTGPHTGDADDDAMWERLTRYLPEPRGAS.

It participates in antibiotic biosynthesis; streptomycin biosynthesis. This is Protein StrN (strN) from Streptomyces griseus.